Reading from the N-terminus, the 151-residue chain is Small ribosomal subunit protein uS13 (151 aa).

Residues 131–151 (RGQRTKSSFRRGRTVGVKKKQ) form a disordered region. Residues 133–151 (QRTKSSFRRGRTVGVKKKQ) are compositionally biased toward basic residues.

Belongs to the universal ribosomal protein uS13 family. In terms of assembly, part of the 30S ribosomal subunit. Forms a loose heterodimer with protein S19. Forms two bridges to the 50S subunit in the 70S ribosome.

Located at the top of the head of the 30S subunit, it contacts several helices of the 16S rRNA. In the 70S ribosome it contacts the 23S rRNA (bridge B1a) and protein L5 of the 50S subunit (bridge B1b), connecting the 2 subunits; these bridges are implicated in subunit movement. In Methanopyrus kandleri (strain AV19 / DSM 6324 / JCM 9639 / NBRC 100938), this protein is Small ribosomal subunit protein uS13.